The sequence spans 212 residues: Transcriptional regulator GfcR (212 aa).

Positions 38–60 are disordered; sequence LVERSGTGTEPDTSDDGGPHDIH.

The protein belongs to the purine/pyrimidine phosphoribosyltransferase family. GfcR subfamily.

Functionally, DNA-binding transcriptional regulator that functions as a regulator of central sugar catabolic pathways. This is Transcriptional regulator GfcR from Haloarcula marismortui (strain ATCC 43049 / DSM 3752 / JCM 8966 / VKM B-1809) (Halobacterium marismortui).